Reading from the N-terminus, the 231-residue chain is Homeobox protein EMX1 (231 aa).

The homeobox DNA-binding region spans 133–192; the sequence is PKRIRTAFSPSQLLRLERAFEKNHYVVGAERKQLANSLSLSETQVKVWFQNRRTKYKRQK. A disordered region spans residues 193–231; it reads LEEEGPECTQKKKGNHHINRWRIATKQTGSEDIDVMSDA. Residues 203–212 show a composition bias toward basic residues; that stretch reads KKKGNHHINR.

This sequence belongs to the EMX homeobox family.

Its subcellular location is the nucleus. In terms of biological role, may function in combinations with OTX1/2 to specify cell fates in the developing central nervous system. The sequence is that of Homeobox protein EMX1 (emx1) from Danio rerio (Zebrafish).